A 318-amino-acid polypeptide reads, in one-letter code: MFVGRVGPVDRRSDGERSRRPREFEYIRYETIDDGRIAAITLDRPKQRNAQTRGMLVELGAAFELAEADDTVRVVILRAAGPAFSAGHDLGSADDIRERSPGPDQHPSYRCNGATFGGVESRNRQEWHYYFENTKRWRNLRKITIAQVHGAVLSAGLMLAWCCDLIVASEDTVFADVVGTRLGMCGVEYFGHPWEFGPRKTKELLLTGDCIGADEAHALGMVSKVFPADELATSTIEFARRIAKVPTMAALLIKESVNQTVDAMGFSAALDGCFKIHQLNHAHWGEVTGGKLSYGTVEYGLEDWRAAPQIRPAIKQRP.

The interval 90–110 (LGSADDIRERSPGPDQHPSYR) is disordered.

This sequence belongs to the enoyl-CoA hydratase/isomerase family.

In Mycobacterium tuberculosis (strain ATCC 25618 / H37Rv), this protein is Putative enoyl-CoA hydratase EchA13 (echA13).